Consider the following 588-residue polypeptide: Aspartate--tRNA ligase (588 aa).

L-aspartate is bound at residue Glu-177. Residues 201–204 (QLFK) are aspartate. Arg-223 lines the L-aspartate pocket. ATP contacts are provided by residues 223-225 (RDE) and Gln-232. His-451 contributes to the L-aspartate binding site. Glu-485 is an ATP binding site. Position 492 (Arg-492) interacts with L-aspartate. 537 to 540 (GLDR) is an ATP binding site.

It belongs to the class-II aminoacyl-tRNA synthetase family. Type 1 subfamily. In terms of assembly, homodimer.

The protein localises to the cytoplasm. It carries out the reaction tRNA(Asp) + L-aspartate + ATP = L-aspartyl-tRNA(Asp) + AMP + diphosphate. Its function is as follows. Catalyzes the attachment of L-aspartate to tRNA(Asp) in a two-step reaction: L-aspartate is first activated by ATP to form Asp-AMP and then transferred to the acceptor end of tRNA(Asp). In Staphylococcus aureus (strain NCTC 8325 / PS 47), this protein is Aspartate--tRNA ligase.